Here is a 689-residue protein sequence, read N- to C-terminus: Glycine--tRNA ligase beta subunit (689 aa).

Belongs to the class-II aminoacyl-tRNA synthetase family. Tetramer of two alpha and two beta subunits.

The protein localises to the cytoplasm. The enzyme catalyses tRNA(Gly) + glycine + ATP = glycyl-tRNA(Gly) + AMP + diphosphate. In Sodalis glossinidius (strain morsitans), this protein is Glycine--tRNA ligase beta subunit.